The chain runs to 328 residues: Biotin synthase (328 aa).

The Radical SAM core domain occupies 50 to 277; it reads FGDQVHLCCI…GKEIVICGGR (228 aa). [4Fe-4S] cluster is bound by residues Cys67, Cys71, and Cys74. Positions 111, 142, and 202 each coordinate [2Fe-2S] cluster.

This sequence belongs to the radical SAM superfamily. Biotin synthase family. Homodimer. [4Fe-4S] cluster is required as a cofactor. Requires [2Fe-2S] cluster as cofactor.

It catalyses the reaction (4R,5S)-dethiobiotin + (sulfur carrier)-SH + 2 reduced [2Fe-2S]-[ferredoxin] + 2 S-adenosyl-L-methionine = (sulfur carrier)-H + biotin + 2 5'-deoxyadenosine + 2 L-methionine + 2 oxidized [2Fe-2S]-[ferredoxin]. It participates in cofactor biosynthesis; biotin biosynthesis; biotin from 7,8-diaminononanoate: step 2/2. In terms of biological role, catalyzes the conversion of dethiobiotin (DTB) to biotin by the insertion of a sulfur atom into dethiobiotin via a radical-based mechanism. This is Biotin synthase from Desulfatibacillum aliphaticivorans.